Reading from the N-terminus, the 476-residue chain is Sulfate adenylyltransferase subunit 1 (476 aa).

In terms of domain architecture, tr-type G spans 24–240 (KSLLRFLTCG…LENVDIDRDK (217 aa)). Residues 33-40 (GSVDDGKS) form a G1 region. A GTP-binding site is contributed by 33–40 (GSVDDGKS). The tract at residues 91 to 95 (GITID) is G2. The interval 112–115 (DTPG) is G3. Residues 112-116 (DTPGH) and 167-170 (NKMD) each bind GTP. Residues 167–170 (NKMD) are G4. Residues 205-207 (SAL) are G5.

It belongs to the TRAFAC class translation factor GTPase superfamily. Classic translation factor GTPase family. CysN/NodQ subfamily. As to quaternary structure, heterodimer composed of CysD, the smaller subunit, and CysN.

It catalyses the reaction sulfate + ATP + H(+) = adenosine 5'-phosphosulfate + diphosphate. It functions in the pathway sulfur metabolism; hydrogen sulfide biosynthesis; sulfite from sulfate: step 1/3. With CysD forms the ATP sulfurylase (ATPS) that catalyzes the adenylation of sulfate producing adenosine 5'-phosphosulfate (APS) and diphosphate, the first enzymatic step in sulfur assimilation pathway. APS synthesis involves the formation of a high-energy phosphoric-sulfuric acid anhydride bond driven by GTP hydrolysis by CysN coupled to ATP hydrolysis by CysD. The polypeptide is Sulfate adenylyltransferase subunit 1 (Vibrio cholerae serotype O1 (strain ATCC 39541 / Classical Ogawa 395 / O395)).